Here is a 1914-residue protein sequence, read N- to C-terminus: Myosin light chain kinase, smooth muscle (1914 aa).

Gly2 is subject to N-acetylalanine. Ig-like C2-type domains lie at 33–122 (PAFI…VELT) and 161–249 (PKFA…AELS). A disulfide bridge links Cys182 with Cys233. Tyr231 carries the phosphotyrosine; by ABL1 modification. The segment at 286-393 (DSLEAAAKSK…TRQPGLGSQD (108 aa)) is disordered. Ser305 carries the post-translational modification Phosphoserine. Residues 318 to 329 (RESKLESCKDSP) are compositionally biased toward basic and acidic residues. A compositionally biased stretch (polar residues) spans 331 to 347 (TAPQTPVLQKTSSSITL). Ser343 and Ser365 each carry phosphoserine. Ig-like C2-type domains follow at residues 414–503 (PKFE…WTLQ) and 514–599 (PSFS…AWVT). Disulfide bonds link Cys435/Cys487 and Cys535/Cys583. At Tyr464 the chain carries Phosphotyrosine; by ABL1 and SRC. Tyr471 carries the post-translational modification Phosphotyrosine; by SRC. Tyr556 bears the Phosphotyrosine; by ABL1 mark. An N6-acetyllysine modification is found at Lys608. The residue at position 611 (Tyr611) is a Phosphotyrosine; by ABL1. Ig-like C2-type domains follow at residues 620 to 711 (PTAP…AVLT) and 721 to 821 (PWFI…ALPR). Cys742 and Cys805 are oxidised to a cystine. 2 positions are modified to phosphotyrosine; by ABL1: Tyr792 and Tyr846. A run of 4 repeats spans residues 868-895 (DVRG…VEQL), 896-923 (DFRD…AEQM), 924-951 (DFRA…PQQV), and 952-979 (DFRS…PATP). The tract at residues 868–998 (DVRGVLKRRV…KKLPAENGSS (131 aa)) is 5 X 28 AA approximate tandem repeats. The tract at residues 923–963 (MDFRANLQRQVKPKTVSEEERKVHSPQQVDFRSVLAKKGTS) is actin-binding (calcium/calmodulin-sensitive). The disordered stretch occupies residues 932-1098 (QVKPKTVSEE…KRSESQGTAP (167 aa)). Ser947 bears the Phosphoserine mark. Residues 948 to 963 (PQQVDFRSVLAKKGTS) form a calmodulin-binding region. A 1-5; truncated repeat occupies 980-998 (DFRSVLGGKKKLPAENGSS). The 2-1; truncated repeat unit spans residues 999–1003 (SAETL). The segment at 999 to 1063 (SAETLNAKAV…KPDENLKSAS (65 aa)) is 6 X 12 AA approximate tandem repeats. 5 consecutive repeat copies span residues 1004–1015 (NAKAVESSKPLS), 1016–1027 (NAQPSGPLKPVG), 1028–1039 (NAKPAETLKPMG), 1040–1051 (NAKPAETLKPMG), and 1052–1063 (NAKPDENLKSAS). Basic and acidic residues predominate over residues 1054–1077 (KPDENLKSASKEELKKDVKNDVNC). An actin-binding (calcium/calmodulin-insensitive) region spans residues 1061–1460 (SASKEELKKD…TVTINTEQKV (400 aa)). One can recognise an Ig-like C2-type 7 domain in the interval 1098 to 1186 (PAFKQKLQDV…GQAECSCQVT (89 aa)). A disulfide bridge connects residues Cys1119 and Cys1170. The disordered stretch occupies residues 1192–1237 (ASENTKAPEMKSRRPKSSLPPVLGTESDATVKKKPAPKTPPKAAMP). One can recognise an Ig-like C2-type 8 domain in the interval 1238–1326 (PQIIQFPEDQ…GSRQAQVNLT (89 aa)). In terms of domain architecture, Fibronectin type-III spans 1334–1426 (PAGTPCASDI…QESELTTVGE (93 aa)). Polar residues predominate over residues 1413–1422 (SEPSQESELT). Residues 1413-1446 (SEPSQESELTTVGEKPEEPKDEVEVSDDDEKEPE) are disordered. Acidic residues predominate over residues 1431–1445 (PKDEVEVSDDDEKEP). The residue at position 1438 (Ser1438) is a Phosphoserine. A Phosphotyrosine; by ABL1 modification is found at Tyr1449. The 256-residue stretch at 1464–1719 (YDIEERLGSG…CTQCLQHPWL (256 aa)) folds into the Protein kinase domain. ATP is bound by residues 1470-1478 (LGSGKFGQV) and Lys1493. A Phosphotyrosine; by ABL1 modification is found at Tyr1575. Catalysis depends on Asp1585, which acts as the Proton acceptor. Tyr1635 is subject to Phosphotyrosine; by ABL1. The tract at residues 1711-1774 (TQCLQHPWLM…SGLSGRKSST (64 aa)) is calmodulin-binding. Phosphoserine is present on residues Ser1759, Ser1760, Ser1772, Ser1773, and Ser1776. The interval 1767-1787 (LSGRKSSTGSPTSPLNAEKLE) is disordered. A compositionally biased stretch (polar residues) spans 1770 to 1781 (RKSSTGSPTSPL). Position 1778 is a phosphothreonine (Thr1778). Residue Ser1779 is modified to Phosphoserine. Positions 1809-1898 (PYFSKTIRDL…GEATCTAELI (90 aa)) constitute an Ig-like C2-type 9 domain. Cys1830 and Cys1882 are joined by a disulfide.

It belongs to the protein kinase superfamily. CAMK Ser/Thr protein kinase family. In terms of assembly, all isoforms including Telokin bind calmodulin. Interacts with SVIL. Interacts with CTTN; this interaction is reduced during thrombin-induced endothelial cell (EC) contraction but is promoted by the barrier-protective agonist sphingosine 1-phosphate (S1P) within lamellipodia. A complex made of ABL1, CTTN and MYLK regulates cortical actin-based cytoskeletal rearrangement critical to sphingosine 1-phosphate (S1P)-mediated endothelial cell (EC) barrier enhancement. Binds to NAA10/ARD1 and PTK2B/PYK2. The cofactor is Mg(2+). Ca(2+) is required as a cofactor. Can probably be down-regulated by phosphorylation. Tyrosine phosphorylation by ABL1 increases kinase activity, reverses MLCK-mediated inhibition of Arp2/3-mediated actin polymerization, and enhances CTTN-binding. Phosphorylation by SRC at Tyr-464 and Tyr-471 promotes CTTN binding. In terms of processing, the C-terminus is deglutamylated by AGTPBP1/CCP1, AGBL1/CCP4 and AGBL4/CCP6, leading to the formation of Myosin light chain kinase, smooth muscle, deglutamylated form. The consequences of C-terminal deglutamylation are unknown. Post-translationally, acetylated at Lys-608 by NAA10/ARD1 via a calcium-dependent signaling; this acetylation represses kinase activity and reduces tumor cell migration. In terms of tissue distribution, smooth muscle and non-muscle isozymes are expressed in a wide variety of adult and fetal tissues and in cultured endothelium with qualitative expression appearing to be neither tissue- nor development-specific. Non-muscle isoform 2 is the dominant splice variant expressed in various tissues. Telokin has been found in a wide variety of adult and fetal tissues. Accumulates in well differentiated enterocytes of the intestinal epithelium in response to tumor necrosis factor (TNF).

It is found in the cytoplasm. The protein localises to the cell projection. It localises to the lamellipodium. Its subcellular location is the cleavage furrow. The protein resides in the cytoskeleton. It is found in the stress fiber. It catalyses the reaction L-seryl-[myosin light chain] + ATP = O-phospho-L-seryl-[myosin light chain] + ADP + H(+). The enzyme catalyses L-threonyl-[myosin light chain] + ATP = O-phospho-L-threonyl-[myosin light chain] + ADP + H(+). With respect to regulation, isoform 1 is activated by phosphorylation on Tyr-464 and Tyr-471. Isoforms which lack these tyrosine residues are not regulated in this way. All catalytically active isoforms require binding to calcium and calmodulin for activation. Repressed by organometallic pyridylnaphthalimide complexes, wortmannin, ML-7 (a synthetic naphthalenesulphonyl derivative that inhibits the binding of ATP to MLCK) and ML-9. Its function is as follows. Calcium/calmodulin-dependent myosin light chain kinase implicated in smooth muscle contraction via phosphorylation of myosin light chains (MLC). Also regulates actin-myosin interaction through a non-kinase activity. Phosphorylates PTK2B/PYK2 and myosin light-chains. Involved in the inflammatory response (e.g. apoptosis, vascular permeability, leukocyte diapedesis), cell motility and morphology, airway hyperreactivity and other activities relevant to asthma. Required for tonic airway smooth muscle contraction that is necessary for physiological and asthmatic airway resistance. Necessary for gastrointestinal motility. Implicated in the regulation of endothelial as well as vascular permeability, probably via the regulation of cytoskeletal rearrangements. In the nervous system it has been shown to control the growth initiation of astrocytic processes in culture and to participate in transmitter release at synapses formed between cultured sympathetic ganglion cells. Critical participant in signaling sequences that result in fibroblast apoptosis. Plays a role in the regulation of epithelial cell survival. Required for epithelial wound healing, especially during actomyosin ring contraction during purse-string wound closure. Mediates RhoA-dependent membrane blebbing. Triggers TRPC5 channel activity in a calcium-dependent signaling, by inducing its subcellular localization at the plasma membrane. Promotes cell migration (including tumor cells) and tumor metastasis. PTK2B/PYK2 activation by phosphorylation mediates ITGB2 activation and is thus essential to trigger neutrophil transmigration during acute lung injury (ALI). May regulate optic nerve head astrocyte migration. Probably involved in mitotic cytoskeletal regulation. Regulates tight junction probably by modulating ZO-1 exchange in the perijunctional actomyosin ring. Mediates burn-induced microvascular barrier injury; triggers endothelial contraction in the development of microvascular hyperpermeability by phosphorylating MLC. Essential for intestinal barrier dysfunction. Mediates Giardia spp.-mediated reduced epithelial barrier function during giardiasis intestinal infection via reorganization of cytoskeletal F-actin and tight junctional ZO-1. Necessary for hypotonicity-induced Ca(2+) entry and subsequent activation of volume-sensitive organic osmolyte/anion channels (VSOAC) in cervical cancer cells. Responsible for high proliferative ability of breast cancer cells through anti-apoptosis. The polypeptide is Myosin light chain kinase, smooth muscle (Homo sapiens (Human)).